Here is a 92-residue protein sequence, read N- to C-terminus: N(2)-fixation sustaining protein CowN (92 aa).

Belongs to the CowN family.

Its function is as follows. Is required to sustain N(2)-dependent growth in the presence of low levels of carbon monoxide (CO). Probably acts by protecting the N(2) fixation ability of the nitrogenase complex, which is inactivated in the presence of CO. The sequence is that of N(2)-fixation sustaining protein CowN from Cereibacter sphaeroides (strain ATCC 17025 / ATH 2.4.3) (Rhodobacter sphaeroides).